The primary structure comprises 115 residues: Na(+)/H(+) antiporter subunit C1 (115 aa).

The next 3 membrane-spanning stretches (helical) occupy residues 1 to 21 (MEII…YLVL), 28 to 48 (IIMG…TMGG), and 72 to 92 (LILT…VLAF).

It belongs to the CPA3 antiporters (TC 2.A.63) subunit C family. As to quaternary structure, may form a heterooligomeric complex that consists of seven subunits: mnhA1, mnhB1, mnhC1, mnhD1, mnhE1, mnhF1 and mnhG1.

It is found in the cell membrane. Mnh complex is a Na(+)/H(+) antiporter involved in Na(+) excretion. This is Na(+)/H(+) antiporter subunit C1 (mnhC1) from Staphylococcus epidermidis (strain ATCC 35984 / DSM 28319 / BCRC 17069 / CCUG 31568 / BM 3577 / RP62A).